The sequence spans 635 residues: Threonine--tRNA ligase (635 aa).

The TGS domain occupies 1 to 61 (MITVRLPDGS…EKDSDLAIIT (61 aa)). The interval 242-533 (DHRKLGKQLD…LIEHYAGALP (292 aa)) is catalytic. Zn(2+) is bound by residues cysteine 333, histidine 384, and histidine 510.

It belongs to the class-II aminoacyl-tRNA synthetase family. Homodimer. The cofactor is Zn(2+).

The protein localises to the cytoplasm. It catalyses the reaction tRNA(Thr) + L-threonine + ATP = L-threonyl-tRNA(Thr) + AMP + diphosphate + H(+). Functionally, catalyzes the attachment of threonine to tRNA(Thr) in a two-step reaction: L-threonine is first activated by ATP to form Thr-AMP and then transferred to the acceptor end of tRNA(Thr). Also edits incorrectly charged L-seryl-tRNA(Thr). This is Threonine--tRNA ligase from Janthinobacterium sp. (strain Marseille) (Minibacterium massiliensis).